Reading from the N-terminus, the 234-residue chain is Thiamine import ATP-binding protein ThiQ (234 aa).

Residues leucine 2–phenylalanine 230 enclose the ABC transporter domain. An ATP-binding site is contributed by glycine 32–serine 39.

The protein belongs to the ABC transporter superfamily. Thiamine importer (TC 3.A.1.19.1) family. As to quaternary structure, the complex is composed of two ATP-binding proteins (ThiQ), two transmembrane proteins (ThiP) and a solute-binding protein (ThiB).

Its subcellular location is the cell inner membrane. It catalyses the reaction thiamine(out) + ATP + H2O = thiamine(in) + ADP + phosphate + H(+). In terms of biological role, part of the ABC transporter complex ThiBPQ involved in thiamine import. Responsible for energy coupling to the transport system. The sequence is that of Thiamine import ATP-binding protein ThiQ from Vibrio vulnificus (strain CMCP6).